The chain runs to 602 residues: MPRMTQLDLIRNFSIVAHIDHGKSTLADRLIQLTGTVAERDMKAQILDSMDIERERGITIKANTVRIDYPAKDGRTYVLNLIDTPGHVDFAYEVSRSMRAVEGSLLVVDASQGVEAQTLANVYQALDAGHEIVPVLNKIDLPAAEPERVKSQIEDVIGLDASDAVLISAKSGLGIPDVLEAIVHRLPPPKGDREAPLKAMLVDSWYDAYLGVVVMIRVMDGVIRKGDRVKMMQTGAVYGIDRLAVLKPQMVDIAELGPGEIGVLTASIKQVRDTRVGDTITHEKKGCAAPLPGFKPAQPVVFCGLFPVDANDFEALREAIEKLALNDASFTYEMETSAALGFGFRCGFLGLLHLEVVRDRLEREYDLDLITTAPSVVYQIYMKDGTLQELHNPTDMPDLTYVDHIEEPRIRATIMVPDEYLGDVLKLCQDRRGIQLDLSYAGARAMVVYDLPLNEVVFDFYDRLKSVTKGYASFDYQITGYREDFLVKMSILVNDEPVDALSMMVHRDRADMRGRAMVEKLKELIPRHMFKIPIQAAIGGRVIARETISAMRKDVTAKCYGGDATRKRKLLDKQKAGKKKMRQFGKVEIPQQAFINALKMDS.

Residues 8–190 (DLIRNFSIVA…AIVHRLPPPK (183 aa)) form the tr-type G domain. GTP-binding positions include 20 to 25 (DHGKST) and 137 to 140 (NKID).

It belongs to the TRAFAC class translation factor GTPase superfamily. Classic translation factor GTPase family. LepA subfamily.

It is found in the cell inner membrane. It carries out the reaction GTP + H2O = GDP + phosphate + H(+). Required for accurate and efficient protein synthesis under certain stress conditions. May act as a fidelity factor of the translation reaction, by catalyzing a one-codon backward translocation of tRNAs on improperly translocated ribosomes. Back-translocation proceeds from a post-translocation (POST) complex to a pre-translocation (PRE) complex, thus giving elongation factor G a second chance to translocate the tRNAs correctly. Binds to ribosomes in a GTP-dependent manner. This chain is Elongation factor 4, found in Cereibacter sphaeroides (strain ATCC 17023 / DSM 158 / JCM 6121 / CCUG 31486 / LMG 2827 / NBRC 12203 / NCIMB 8253 / ATH 2.4.1.) (Rhodobacter sphaeroides).